A 251-amino-acid chain; its full sequence is Ubiquinone/menaquinone biosynthesis C-methyltransferase UbiE (251 aa).

Residues threonine 74, aspartate 95, asparagine 123–alanine 124, and serine 140 contribute to the S-adenosyl-L-methionine site.

This sequence belongs to the class I-like SAM-binding methyltransferase superfamily. MenG/UbiE family.

The enzyme catalyses a 2-demethylmenaquinol + S-adenosyl-L-methionine = a menaquinol + S-adenosyl-L-homocysteine + H(+). It catalyses the reaction a 2-methoxy-6-(all-trans-polyprenyl)benzene-1,4-diol + S-adenosyl-L-methionine = a 5-methoxy-2-methyl-3-(all-trans-polyprenyl)benzene-1,4-diol + S-adenosyl-L-homocysteine + H(+). Its pathway is quinol/quinone metabolism; menaquinone biosynthesis; menaquinol from 1,4-dihydroxy-2-naphthoate: step 2/2. It functions in the pathway cofactor biosynthesis; ubiquinone biosynthesis. In terms of biological role, methyltransferase required for the conversion of demethylmenaquinol (DMKH2) to menaquinol (MKH2) and the conversion of 2-polyprenyl-6-methoxy-1,4-benzoquinol (DDMQH2) to 2-polyprenyl-3-methyl-6-methoxy-1,4-benzoquinol (DMQH2). This chain is Ubiquinone/menaquinone biosynthesis C-methyltransferase UbiE, found in Pectobacterium atrosepticum (strain SCRI 1043 / ATCC BAA-672) (Erwinia carotovora subsp. atroseptica).